The following is a 248-amino-acid chain: Triosephosphate isomerase (248 aa).

Residue lysine 12 participates in substrate binding. Catalysis depends on histidine 94, which acts as the Electrophile. Glutamate 165 (proton acceptor) is an active-site residue.

Belongs to the triosephosphate isomerase family. As to quaternary structure, homodimer.

The enzyme catalyses D-glyceraldehyde 3-phosphate = dihydroxyacetone phosphate. It functions in the pathway carbohydrate biosynthesis; gluconeogenesis. The protein operates within carbohydrate degradation; glycolysis; D-glyceraldehyde 3-phosphate from glycerone phosphate: step 1/1. The chain is Triosephosphate isomerase (Tpi) from Bombyx mori (Silk moth).